The chain runs to 352 residues: Isoflavone-7-O-methyltransferase 9 (352 aa).

118–127 serves as a coordination point for substrate; that stretch reads VLDPTLSGSY. 5 residues coordinate S-adenosyl-L-methionine: G196, D219, D239, M240, and K253. The active-site Proton acceptor is the H257.

This sequence belongs to the class I-like SAM-binding methyltransferase superfamily. Cation-independent O-methyltransferase family. COMT subfamily. As to quaternary structure, homodimer.

The catalysed reaction is a 7-hydroxyisoflavone + S-adenosyl-L-methionine = a 7-methoxyisoflavone + S-adenosyl-L-homocysteine + H(+). It functions in the pathway phytoalexin biosynthesis; medicarpin biosynthesis. In terms of biological role, transfers a methyl group to 7-hydroxyls of the isoflavones daidzein, genistein and 6,7,4'-trihydroxyisoflavone. Can also methylate (+)6a-hydroxymaackiain with lower efficiency. This Medicago sativa (Alfalfa) protein is Isoflavone-7-O-methyltransferase 9.